A 316-amino-acid chain; its full sequence is 4-hydroxy-3-methylbut-2-enyl diphosphate reductase (316 aa).

A [4Fe-4S] cluster-binding site is contributed by Cys-12. Residues His-43 and His-81 each contribute to the (2E)-4-hydroxy-3-methylbut-2-enyl diphosphate site. Positions 43 and 81 each coordinate dimethylallyl diphosphate. The isopentenyl diphosphate site is built by His-43 and His-81. Residue Cys-103 participates in [4Fe-4S] cluster binding. A (2E)-4-hydroxy-3-methylbut-2-enyl diphosphate-binding site is contributed by His-131. His-131 serves as a coordination point for dimethylallyl diphosphate. His-131 serves as a coordination point for isopentenyl diphosphate. The active-site Proton donor is Glu-133. Thr-170 contacts (2E)-4-hydroxy-3-methylbut-2-enyl diphosphate. Cys-198 is a binding site for [4Fe-4S] cluster. (2E)-4-hydroxy-3-methylbut-2-enyl diphosphate is bound by residues Ser-226, Asn-228, and Ser-271. Positions 226, 228, and 271 each coordinate dimethylallyl diphosphate. The isopentenyl diphosphate site is built by Ser-226, Asn-228, and Ser-271.

This sequence belongs to the IspH family. [4Fe-4S] cluster is required as a cofactor.

It catalyses the reaction isopentenyl diphosphate + 2 oxidized [2Fe-2S]-[ferredoxin] + H2O = (2E)-4-hydroxy-3-methylbut-2-enyl diphosphate + 2 reduced [2Fe-2S]-[ferredoxin] + 2 H(+). The enzyme catalyses dimethylallyl diphosphate + 2 oxidized [2Fe-2S]-[ferredoxin] + H2O = (2E)-4-hydroxy-3-methylbut-2-enyl diphosphate + 2 reduced [2Fe-2S]-[ferredoxin] + 2 H(+). Its pathway is isoprenoid biosynthesis; dimethylallyl diphosphate biosynthesis; dimethylallyl diphosphate from (2E)-4-hydroxy-3-methylbutenyl diphosphate: step 1/1. The protein operates within isoprenoid biosynthesis; isopentenyl diphosphate biosynthesis via DXP pathway; isopentenyl diphosphate from 1-deoxy-D-xylulose 5-phosphate: step 6/6. Functionally, catalyzes the conversion of 1-hydroxy-2-methyl-2-(E)-butenyl 4-diphosphate (HMBPP) into a mixture of isopentenyl diphosphate (IPP) and dimethylallyl diphosphate (DMAPP). Acts in the terminal step of the DOXP/MEP pathway for isoprenoid precursor biosynthesis. The protein is 4-hydroxy-3-methylbut-2-enyl diphosphate reductase of Geobacillus thermodenitrificans (strain NG80-2).